The following is a 198-amino-acid chain: Segregation and condensation protein B (198 aa).

Belongs to the ScpB family. As to quaternary structure, homodimer. Homodimerization may be required to stabilize the binding of ScpA to the Smc head domains. Component of a cohesin-like complex composed of ScpA, ScpB and the Smc homodimer, in which ScpA and ScpB bind to the head domain of Smc. The presence of the three proteins is required for the association of the complex with DNA.

The protein resides in the cytoplasm. Functionally, participates in chromosomal partition during cell division. May act via the formation of a condensin-like complex containing Smc and ScpA that pull DNA away from mid-cell into both cell halves. This is Segregation and condensation protein B from Acetivibrio thermocellus (strain ATCC 27405 / DSM 1237 / JCM 9322 / NBRC 103400 / NCIMB 10682 / NRRL B-4536 / VPI 7372) (Clostridium thermocellum).